Consider the following 115-residue polypeptide: Large ribosomal subunit protein bL19 (115 aa).

It belongs to the bacterial ribosomal protein bL19 family.

In terms of biological role, this protein is located at the 30S-50S ribosomal subunit interface and may play a role in the structure and function of the aminoacyl-tRNA binding site. In Nitratidesulfovibrio vulgaris (strain ATCC 29579 / DSM 644 / CCUG 34227 / NCIMB 8303 / VKM B-1760 / Hildenborough) (Desulfovibrio vulgaris), this protein is Large ribosomal subunit protein bL19.